We begin with the raw amino-acid sequence, 184 residues long: Peptide deformylase (184 aa).

The Fe cation site is built by cysteine 111 and histidine 154. Residue glutamate 155 is part of the active site. Histidine 158 contributes to the Fe cation binding site.

Belongs to the polypeptide deformylase family. Fe(2+) serves as cofactor.

It carries out the reaction N-terminal N-formyl-L-methionyl-[peptide] + H2O = N-terminal L-methionyl-[peptide] + formate. Its function is as follows. Removes the formyl group from the N-terminal Met of newly synthesized proteins. Requires at least a dipeptide for an efficient rate of reaction. N-terminal L-methionine is a prerequisite for activity but the enzyme has broad specificity at other positions. This Lactobacillus delbrueckii subsp. bulgaricus (strain ATCC 11842 / DSM 20081 / BCRC 10696 / JCM 1002 / NBRC 13953 / NCIMB 11778 / NCTC 12712 / WDCM 00102 / Lb 14) protein is Peptide deformylase.